The following is a 91-amino-acid chain: MAHKKGAASSNNGRDSESKRLGVKRFGGQQVKAGEILVRQRGTSFHPGENVGRGGDDTLFALKAGAVQFARKRNRRTVNIVENVEAEPAKA.

The interval M1–R25 is disordered.

Belongs to the bacterial ribosomal protein bL27 family.

The polypeptide is Large ribosomal subunit protein bL27 (Corynebacterium kroppenstedtii (strain DSM 44385 / JCM 11950 / CIP 105744 / CCUG 35717)).